A 429-amino-acid polypeptide reads, in one-letter code: Glutamate-1-semialdehyde 2,1-aminomutase 2 (429 aa).

N6-(pyridoxal phosphate)lysine is present on K267.

This sequence belongs to the class-III pyridoxal-phosphate-dependent aminotransferase family. HemL subfamily. As to quaternary structure, homodimer. Pyridoxal 5'-phosphate is required as a cofactor.

The protein resides in the cytoplasm. It catalyses the reaction (S)-4-amino-5-oxopentanoate = 5-aminolevulinate. Its pathway is porphyrin-containing compound metabolism; protoporphyrin-IX biosynthesis; 5-aminolevulinate from L-glutamyl-tRNA(Glu): step 2/2. The polypeptide is Glutamate-1-semialdehyde 2,1-aminomutase 2 (gsaB) (Bacillus subtilis (strain 168)).